The chain runs to 610 residues: Preterminal protein (610 aa).

The interval 288 to 379 (TLRSGTQTGL…ESFSDDVGLS (92 aa)) is disordered. A Nuclear localization signal motif is present at residues 328–337 (SLPIRRRRRR). Residues 331-340 (IRRRRRRGTR) show a composition bias toward basic residues. Positions 341 to 350 (RQVEREDSVR) are enriched in basic and acidic residues. Residue S549 is modified to O-(5'-phospho-DNA)-serine.

The protein belongs to the adenoviridae terminal protein family. In terms of assembly, heterodimer with the polymerase; this heterodimer binds to bp 9 to 18 of the genome. Interacts with host POU2F1; POU2F1 binds to the auxiliary sequences in the inverted terminal repeats and tethers the pTP-POL heterodimer to the origin DNA thereby participating in the assembly of the pre-initiation complex (POL-TP-DBP-NFIA-POU2F1). Post-translationally, preterminal protein is used to replicate viral genome, upon genomic encapsidation it is processed first into iTP and finally into TP by adenovirus protease.

The protein localises to the host nucleus matrix. Functionally, protein covalently bound to the viral DNA that acts as a primer for viral genomic replication by DNA strand displacement. Assembles on the viral origin of replication in an initiation complex with viral polymerase, DBP, host NFIA and host POU2F1/OCT1. During initiation, the polymerase covalently couples the first dCTP with Ser-580 of pTP. The terminal protein stimulates the template activity over 20 fold compared to protein-free templates. Neo-synthesized viral genomes are linked to two preterminal proteins, one for each 5' end. These new genomes are encapsidated in the nucleus, and during capsid maturation by viral protease, preterminal protein is first cleaved into intermediary (iTP), then into mature TP. May play a role in host nuclear matrix localization of genomic DNA. The polypeptide is Preterminal protein (Snake adenovirus serotype 1 (SnAdV-1)).